A 350-amino-acid polypeptide reads, in one-letter code: Enoyl-[acyl-carrier-protein] reductase, mitochondrial (350 aa).

The transit peptide at 1-14 (MNSTRNIISLVRRY) directs the protein to the mitochondrion. Catalysis depends on Y69, which acts as the Proton donor. Residues N143, 169-172 (NSMV), 192-194 (RDG), 261-264 (YGGM), 286-288 (FWL), and K343 contribute to the NADP(+) site.

Belongs to the zinc-containing alcohol dehydrogenase family. Quinone oxidoreductase subfamily. In terms of assembly, homodimer.

The protein localises to the mitochondrion. It catalyses the reaction a 2,3-saturated acyl-[ACP] + NADP(+) = a (2E)-enoyl-[ACP] + NADPH + H(+). Its function is as follows. Catalyzes the NADPH-dependent reduction of trans-2-enoyl thioesters in mitochondrial fatty acid synthesis (fatty acid synthesis type II). Fatty acid chain elongation in mitochondria uses acyl carrier protein (ACP) as an acyl group carrier, but the enzyme accepts both ACP and CoA thioesters as substrates in vitro. This is Enoyl-[acyl-carrier-protein] reductase, mitochondrial (mecr) from Dictyostelium discoideum (Social amoeba).